The sequence spans 197 residues: MWIIIASYGVLIIVLAIGIGVGVGVIRKVLKKGMKAEMTIGERMLCFGYYLLPVLECMTHCGPDVLNGWMKGLYKRSLGDLVVVYSTYPILGFMIFFMSYFLLVRGILQVRKKVRFHVSQALIIYLLTSIIGSLLNALPEMILMGWFGSTCLDILFILTMGSVIYASYQVWNGELTRLPLISEAAKLQVQDGEGEKK.

5 helical membrane-spanning segments follow: residues Ile3–Val23, Phe47–Leu66, Leu81–Phe101, Val118–Leu138, and Met141–Gly161.

Belongs to the Tic20 family.

It localises to the plastid. It is found in the chloroplast membrane. This Cyanidioschyzon merolae (strain NIES-3377 / 10D) (Unicellular red alga) protein is Tic20 family protein Ycf60 (ycf60).